Here is a 935-residue protein sequence, read N- to C-terminus: Isoleucine--tRNA ligase (935 aa).

Positions 58–68 (PYANGNLHLGH) match the 'HIGH' region motif. Glu-559 provides a ligand contact to L-isoleucyl-5'-AMP. The 'KMSKS' region motif lies at 600-604 (KMSKS). Lys-603 contacts ATP. Zn(2+)-binding residues include Cys-898, Cys-901, Cys-918, and Cys-921.

This sequence belongs to the class-I aminoacyl-tRNA synthetase family. IleS type 1 subfamily. As to quaternary structure, monomer. Zn(2+) serves as cofactor.

Its subcellular location is the cytoplasm. The enzyme catalyses tRNA(Ile) + L-isoleucine + ATP = L-isoleucyl-tRNA(Ile) + AMP + diphosphate. Catalyzes the attachment of isoleucine to tRNA(Ile). As IleRS can inadvertently accommodate and process structurally similar amino acids such as valine, to avoid such errors it has two additional distinct tRNA(Ile)-dependent editing activities. One activity is designated as 'pretransfer' editing and involves the hydrolysis of activated Val-AMP. The other activity is designated 'posttransfer' editing and involves deacylation of mischarged Val-tRNA(Ile). The chain is Isoleucine--tRNA ligase from Haemophilus ducreyi (strain 35000HP / ATCC 700724).